Reading from the N-terminus, the 447-residue chain is Beta-glucuronosyltransferase GlcAT14A (447 aa).

Residues 1–33 (MKKLRSYYSNVRHHQNHHHHHHHHSNIVSSERK) lie on the Cytoplasmic side of the membrane. The helical; Signal-anchor for type II membrane protein transmembrane segment at 34 to 54 (WIFFPLLIGSIFALFLLFLTT) threads the bilayer. The Lumenal segment spans residues 55–447 (TLTSPTGGVR…TENFRSKQCK (393 aa)). Residues Asn151, Asn200, Asn329, and Asn405 are each glycosylated (N-linked (GlcNAc...) asparagine).

It belongs to the glycosyltransferase 14 family.

It localises to the golgi apparatus membrane. Functionally, beta-glucuronosyltransferase involved in the biosynthesis of type II arabinogalactan (AG). Modifies both the beta-1,6-linked galactan and beta-1,3-linked galactan present in type II AG. Transfers glucuronate to beta-1,6-galactooligosaccharides with degrees of polymerization ranging from 3 to 11. Transfers glucuronate to beta-1,3-galactooligosaccharides with degrees of polymerization ranging from 5 to 7. The addition of glucuronate at the O6 position may terminate galactose chain extension. Required for cell elongation during seedling growth. The sequence is that of Beta-glucuronosyltransferase GlcAT14A from Arabidopsis thaliana (Mouse-ear cress).